Here is an 84-residue protein sequence, read N- to C-terminus: MKLTCVLVVLLLVLPFGDLITTSNTEDNKRGATPWQNSLKARGVCSTPEGSCVHNGCICQNAPCCHPSGCNWANVCPGFLWDKN.

Positions 1–19 (MKLTCVLVVLLLVLPFGDL) are cleaved as a signal peptide. A propeptide spanning residues 20-42 (ITTSNTEDNKRGATPWQNSLKAR) is cleaved from the precursor. Disulfide bonds link C45/C57, C52/C65, C59/C70, and C64/C76. 4-hydroxyproline is present on P48. 6'-bromotryptophan is present on W72. At P77 the chain carries 4-hydroxyproline. W81 carries the 6'-bromotryptophan modification.

Belongs to the conotoxin O1 superfamily. Expressed by the venom duct.

The protein localises to the secreted. Mu-conotoxins block voltage-gated sodium channels. This toxin reversibly blocks voltage-gated sodium channel in cephalopods, with no alteration in the voltage dependence of sodium conductance or on the kinetics of inactivation. In Californiconus californicus (California cone), this protein is Mu-conotoxin-like Cal 12.2a.